A 328-amino-acid chain; its full sequence is Phosphate acetyltransferase (328 aa).

This sequence belongs to the phosphate acetyltransferase and butyryltransferase family.

The protein localises to the cytoplasm. It carries out the reaction acetyl-CoA + phosphate = acetyl phosphate + CoA. It participates in metabolic intermediate biosynthesis; acetyl-CoA biosynthesis; acetyl-CoA from acetate: step 2/2. The polypeptide is Phosphate acetyltransferase (pta) (Staphylococcus aureus (strain MRSA252)).